The primary structure comprises 212 residues: Lipid A acyltransferase PagP (212 aa).

The N-terminal stretch at 1-26 is a signal peptide; that stretch reads MSSTYFHSSLLAATLFSVTLTAPAFA. Low complexity predominate over residues 29–44; the sequence is NTQNTPQTITTKKPQP. Residues 29-50 form a disordered region; it reads NTQNTPQTITTKKPQPAENTFS. Catalysis depends on residues H84, D127, and S128.

Belongs to the lipid A palmitoyltransferase family. In terms of assembly, homodimer.

The protein resides in the cell outer membrane. It carries out the reaction a lipid A + a 1,2-diacyl-sn-glycero-3-phosphocholine = a hepta-acyl lipid A + a 2-acyl-sn-glycero-3-phosphocholine. The enzyme catalyses a lipid IVA + a 1,2-diacyl-sn-glycero-3-phosphocholine = a lipid IVB + a 2-acyl-sn-glycero-3-phosphocholine. It catalyses the reaction a lipid IIA + a 1,2-diacyl-sn-glycero-3-phosphocholine = a lipid IIB + a 2-acyl-sn-glycero-3-phosphocholine. Functionally, transfers a fatty acid residue from the sn-1 position of a phospholipid to the N-linked hydroxyfatty acid chain on the proximal unit of lipid A or its precursors. This chain is Lipid A acyltransferase PagP, found in Proteus mirabilis (strain HI4320).